Reading from the N-terminus, the 1347-residue chain is BTB/POZ domain-containing protein 1 (1347 aa).

2 ANK repeats span residues 51 to 81 (YGRT…DVFV) and 86 to 115 (SGYT…SFRS). 4 RCC1 repeats span residues 148 to 198 (GNEL…DKIL), 215 to 264 (SQNV…ALTK), 265 to 322 (FGSI…AWTD), and 324 to 372 (DIYS…CLLQ). 2 BTB domains span residues 619–698 (SDVT…LSPW) and 758–829 (MDTV…VELF). Disordered stretches follow at residues 1006 to 1029 (SSNQ…NVVN), 1104 to 1139 (EKAD…SKQV), 1193 to 1237 (EGSS…PLSI), and 1286 to 1347 (GILK…RAVK). Residues 1013-1023 (LNKEDAEEKSP) show a composition bias toward basic and acidic residues. Polar residues-rich tracts occupy residues 1208-1237 (SNGS…PLSI) and 1297-1306 (NRKQGQASKQ). Basic residues predominate over residues 1336–1347 (TTHKKGKARAVK).

Interacts with cul3.

It functions in the pathway protein modification; protein ubiquitination. Its function is as follows. Probable substrate-specific adapter of an E3 ubiquitin-protein ligase complex which mediates the ubiquitination and subsequent proteasomal degradation of target proteins. This Schizosaccharomyces pombe (strain 972 / ATCC 24843) (Fission yeast) protein is BTB/POZ domain-containing protein 1 (btb1).